A 222-amino-acid chain; its full sequence is RNA chaperone ProQ (222 aa).

The segment covering 94-113 has biased composition (basic and acidic residues); the sequence is EHADHAKQQLDESKAKAAEK. Positions 94–171 are disordered; sequence EHADHAKQQL…PAKLTDSDLQ (78 aa). Residues 114–131 show a composition bias toward basic residues; that stretch reads RKAKLAQQPKRKDKRQFN. Over residues 133–148 the composition is skewed to basic and acidic residues; sequence PKGEKSANSDHADTKR. Residues 155–164 are compositionally biased toward low complexity; the sequence is NRPNTTPPAK.

Belongs to the ProQ family.

The protein localises to the cytoplasm. In terms of biological role, RNA chaperone with significant RNA binding, RNA strand exchange and RNA duplexing activities. This chain is RNA chaperone ProQ, found in Alteromonas mediterranea (strain DSM 17117 / CIP 110805 / LMG 28347 / Deep ecotype).